Reading from the N-terminus, the 648-residue chain is Zinc finger CW-type PWWP domain protein 1 (648 aa).

2 disordered regions span residues 1–103 and 137–237; these read MMTT…TNAE and VVST…QDHS. 2 stretches are compositionally biased toward basic and acidic residues: residues 61 to 79 and 88 to 97; these read KKKEEKATMKNVPSREQEK and QAEKKEKEKS. Residues 74–109 are a coiled coil; that stretch reads SREQEKKRKAQINKQAEKKEKEKSSLTNAEFEEIVQ. Residues 194–208 show a composition bias toward basic residues; it reads SKKKSNRLTLSKRKK. Basic and acidic residues predominate over residues 209-237; sequence EAHEKVEKTQGGHEHRQEDRLKKTVQDHS. A CW-type zinc finger spans residues 250 to 304; the sequence is FGQCLVWVQCSFPNCGKWRRLCGNIDPSVLPDNWSCDQNTDVQYNRCDIPEETWT. The Zn(2+) site is built by Cys259, Cys264, Cys285, and Cys296. The PWWP domain occupies 317–383; sequence PGSIIWAKQY…VNMLKNFQEL (67 aa). Residues 436–648 are disordered; the sequence is GERKDLQLSG…EDFPVALFGK (213 aa). Over residues 453-471 the composition is skewed to basic and acidic residues; it reads LEKKEKEEELEKEEGEKTD. Residues 505–516 are compositionally biased toward basic residues; it reads TLQRKIMKRSLG. Positions 585–595 are enriched in basic and acidic residues; sequence AKEEPRHREPL. Acidic residues predominate over residues 604–618; sequence LEDEASSDLDLEQLM. Ser636 bears the Phosphoserine mark.

As to expression, testis.

It localises to the nucleus. Its subcellular location is the chromosome. In terms of biological role, dual histone methylation reader specific for PRDM9-catalyzed histone marks (H3K4me3 and H3K36me3). Facilitates the repair of PRDM9-induced meiotic double-strand breaks (DSBs). Essential for male fertility and spermatogenesis. Required for meiosis prophase I progression in male but not in female germ cells. The polypeptide is Zinc finger CW-type PWWP domain protein 1 (ZCWPW1) (Homo sapiens (Human)).